A 1040-amino-acid chain; its full sequence is Multidrug resistance protein MdtB (1040 aa).

12 consecutive transmembrane segments (helical) span residues 16-36 (FIMR…AGII), 342-362 (DTQF…YLFL), 369-389 (IIPG…MVFL), 396-416 (LTLM…IVVI), 440-460 (IGFT…PLLF), 472-492 (FAVT…TLTP), 537-557 (WLTL…WVFI), 863-883 (LGST…VLGV), 888-908 (FIHP…ALLA), 911-931 (LAGS…IGIV), 968-988 (ILMT…STGV), and 998-1018 (IGMV…TPVI).

Belongs to the resistance-nodulation-cell division (RND) (TC 2.A.6) family. MdtB subfamily. As to quaternary structure, part of a tripartite efflux system composed of MdtA, MdtB and MdtC. MdtB forms a heteromultimer with MdtC.

It localises to the cell inner membrane. The protein is Multidrug resistance protein MdtB of Klebsiella pneumoniae subsp. pneumoniae (strain ATCC 700721 / MGH 78578).